The following is a 242-amino-acid chain: Ribosomal RNA small subunit methyltransferase G (242 aa).

Residues Gly-78, Phe-83, 129–130 (AE), and Arg-148 each bind S-adenosyl-L-methionine.

Belongs to the methyltransferase superfamily. RNA methyltransferase RsmG family.

Its subcellular location is the cytoplasm. In terms of biological role, specifically methylates the N7 position of a guanine in 16S rRNA. The chain is Ribosomal RNA small subunit methyltransferase G from Lachnoclostridium phytofermentans (strain ATCC 700394 / DSM 18823 / ISDg) (Clostridium phytofermentans).